The sequence spans 463 residues: Quinolone resistance protein NorB (463 aa).

The next 14 helical transmembrane spans lie at 17 to 37 (IGIVLSVITFWLFAQSLVNVV), 53 to 73 (IAVSITALFSGMFVVGAGGLA), 86 to 106 (IILNILGSLLIIISNIPLLLI), 107 to 127 (IGRLIQGLSAACIMPATLSII), 142 to 162 (YWSIGSWGGSGVCSFFGGAVA), 165 to 185 (LGWRWIFILSIIISLIALFLI), 201 to 221 (FDIKGLVLLVIMLLSLNILIT), 230 to 250 (SLLFITLLAIAIGSFSLFIVL), 273 to 293 (TASNFLLNGVAGTLIVANTFV), 299 to 319 (YSSLQAGSLSITYLVMVLIMI), 334 to 354 (PMLIGTGVLIVGECLISLTFL), 357 to 377 (IFYVICCIIGYLFFGLGLGIY), 403 to 423 (MASALGGAFGVALSGAVYAIV), and 435 to 455 (IALWLNAAMGILSFVIILLLV).

It belongs to the major facilitator superfamily. TCR/Tet family.

Its subcellular location is the cell membrane. In terms of biological role, multidrug efflux pump that acts independently of NorA and is one of the factors that confers resistance against diverse quinolones and chemical compounds. The protein is Quinolone resistance protein NorB (norB) of Staphylococcus aureus (strain COL).